The chain runs to 156 residues: Cyanate hydratase (156 aa).

Residues Arg-96, Glu-99, and Ser-122 contribute to the active site.

It belongs to the cyanase family.

It carries out the reaction cyanate + hydrogencarbonate + 3 H(+) = NH4(+) + 2 CO2. Its function is as follows. Catalyzes the reaction of cyanate with bicarbonate to produce ammonia and carbon dioxide. This Burkholderia vietnamiensis (strain G4 / LMG 22486) (Burkholderia cepacia (strain R1808)) protein is Cyanate hydratase.